Here is a 430-residue protein sequence, read N- to C-terminus: Adenylosuccinate synthetase (430 aa).

GTP contacts are provided by residues 17-23 and 45-47; these read GDEGKGK and GHT. The Proton acceptor role is filled by D18. Mg(2+) contacts are provided by D18 and G45. Residues 18-21, 43-46, T139, R153, N229, T244, and R308 contribute to the IMP site; these read DEGK and NAGH. H46 functions as the Proton donor in the catalytic mechanism. 304–310 lines the substrate pocket; the sequence is TVTGRRR. GTP-binding positions include R310, 336–338, and 418–420; these read KLD and GVG.

This sequence belongs to the adenylosuccinate synthetase family. In terms of assembly, homodimer. Mg(2+) is required as a cofactor.

Its subcellular location is the cytoplasm. The catalysed reaction is IMP + L-aspartate + GTP = N(6)-(1,2-dicarboxyethyl)-AMP + GDP + phosphate + 2 H(+). Its pathway is purine metabolism; AMP biosynthesis via de novo pathway; AMP from IMP: step 1/2. Its function is as follows. Plays an important role in the de novo pathway and in the salvage pathway of purine nucleotide biosynthesis. Catalyzes the first committed step in the biosynthesis of AMP from IMP. The chain is Adenylosuccinate synthetase from Cryptococcus neoformans var. neoformans serotype D (strain JEC21 / ATCC MYA-565) (Filobasidiella neoformans).